Consider the following 267-residue polypeptide: Type III pantothenate kinase (267 aa).

Position 6 to 13 (Asp6 to Lys13) interacts with ATP. Residues Tyr96 and Gly103 to Arg106 contribute to the substrate site. Residue Asp105 is the Proton acceptor of the active site. Residue Thr131 participates in ATP binding. Thr181 contacts substrate.

This sequence belongs to the type III pantothenate kinase family. Homodimer. The cofactor is NH4(+). K(+) is required as a cofactor.

It localises to the cytoplasm. The catalysed reaction is (R)-pantothenate + ATP = (R)-4'-phosphopantothenate + ADP + H(+). Its pathway is cofactor biosynthesis; coenzyme A biosynthesis; CoA from (R)-pantothenate: step 1/5. Its function is as follows. Catalyzes the phosphorylation of pantothenate (Pan), the first step in CoA biosynthesis. This chain is Type III pantothenate kinase, found in Bordetella bronchiseptica (strain ATCC BAA-588 / NCTC 13252 / RB50) (Alcaligenes bronchisepticus).